The primary structure comprises 49 residues: uncharacterized protein (49 aa).

Residues 1 to 49 are disordered; sequence MSNETFEQNEPKPTKVEELQPGDVEAVEDSTPVREITQTDHINKAMLQI. The span at 9–18 shows a compositional bias: basic and acidic residues; that stretch reads NEPKPTKVEE.

This is an uncharacterized protein from Dictyostelium discoideum (Social amoeba).